The following is a 511-amino-acid chain: Apolipoprotein N-acyltransferase (511 aa).

The next 6 helical transmembrane spans lie at 7–29 (PGWP…LAPF), 58–78 (GWWY…VSIH), 90–110 (LLML…AWLW), 125–145 (LAFA…LTGF), 163–183 (VPVG…ALLV), and 192–212 (GASL…GLYL). Residues 230–470 (IQGNIAQELK…QGILRGEVIP (241 aa)) enclose the CN hydrolase domain. Glu-269 (proton acceptor) is an active-site residue. Lys-330 is an active-site residue. Catalysis depends on Cys-382, which acts as the Nucleophile. A helical membrane pass occupies residues 482-502 (VWPLAGLAGVLLLWALLGRQL).

Belongs to the CN hydrolase family. Apolipoprotein N-acyltransferase subfamily.

The protein localises to the cell inner membrane. It catalyses the reaction N-terminal S-1,2-diacyl-sn-glyceryl-L-cysteinyl-[lipoprotein] + a glycerophospholipid = N-acyl-S-1,2-diacyl-sn-glyceryl-L-cysteinyl-[lipoprotein] + a 2-acyl-sn-glycero-3-phospholipid + H(+). It participates in protein modification; lipoprotein biosynthesis (N-acyl transfer). Catalyzes the phospholipid dependent N-acylation of the N-terminal cysteine of apolipoprotein, the last step in lipoprotein maturation. The chain is Apolipoprotein N-acyltransferase from Pseudomonas aeruginosa (strain ATCC 15692 / DSM 22644 / CIP 104116 / JCM 14847 / LMG 12228 / 1C / PRS 101 / PAO1).